The chain runs to 398 residues: MKSTSLLTASVLLGSASAAVHKLKLNKVPLDEQLYTHNIDAHVRALGQKYMGIRPNVHQELLEENSLNDMSRHDVLVDNFLNAQYFSEISLGTPPQKFKVVLDTGSSNLWVPGSDCSSIACFLHNKYDSSASSTYKANGTEFAIKYGSGELSGFVSQDTLQIGDLKVVKQDFAEATNEPGLAFAFGRFDGILGLGYDTISVNKIVPPFYNMLDQGLLDEPVFAFYLGDTNKEGDNSEASFGGVDKNHYTGELTKIPLRRKAYWEVDFDAIALGDNVAELENTGIILDTGTSLIALPSTLADLLNKEIGAKKGFTGQYSIECDKRDSLPDLTFTLAGHNFTIGPYDYTLEVQGSCISSFMGMDFPEPVGPLAILGDAFLRKWYSVYDLGNNAVGLAKAK.

A signal peptide spans 1–18 (MKSTSLLTASVLLGSASA). Residues 19–70 (AVHKLKLNKVPLDEQLYTHNIDAHVRALGQKYMGIRPNVHQELLEENSLNDM) constitute a propeptide, activation peptide. The Peptidase A1 domain occupies 85-395 (YFSEISLGTP…DLGNNAVGLA (311 aa)). Residue Asp103 is part of the active site. Residues Cys116 and Cys121 are joined by a disulfide bond. N-linked (GlcNAc...) asparagine glycosylation is present at Asn138. The active site involves Asp287. The cysteines at positions 321 and 354 are disulfide-linked. Asn338 carries N-linked (GlcNAc...) asparagine glycosylation.

The protein belongs to the peptidase A1 family.

Its subcellular location is the vacuole lumen. It is found in the secreted. The enzyme catalyses Hydrolysis of proteins with broad specificity for peptide bonds. Cleaves -Leu-Leu-|-Val-Tyr- bond in a synthetic substrate. Does not act on esters of Tyr or Arg.. Its function is as follows. Vacuolar aspartic endopeptidase which is probably also secreted and contributes to virulence. This is Vacuolar protease A (pep2) from Aspergillus fumigatus (strain ATCC MYA-4609 / CBS 101355 / FGSC A1100 / Af293) (Neosartorya fumigata).